The primary structure comprises 149 residues: Large ribosomal subunit protein uL15 (149 aa).

The interval 8 to 49 (HDLRPAAGSNKPKTRVGRGEASKGKTAGRGTKGTGARKQVPA) is disordered. Low complexity predominate over residues 31-45 (GKTAGRGTKGTGARK).

The protein belongs to the universal ribosomal protein uL15 family. In terms of assembly, part of the 50S ribosomal subunit.

Binds to the 23S rRNA. The chain is Large ribosomal subunit protein uL15 from Corynebacterium aurimucosum (strain ATCC 700975 / DSM 44827 / CIP 107346 / CN-1) (Corynebacterium nigricans).